We begin with the raw amino-acid sequence, 240 residues long: UDP-2,3-diacylglucosamine hydrolase (240 aa).

5 residues coordinate Mn(2+): Asp8, His10, Asp41, Asn79, and His114. Substrate is bound at residue 79 to 80 (NR). Residues Asp122, Ser160, Asn164, Lys167, and His195 each coordinate substrate. Residues His195 and His197 each contribute to the Mn(2+) site.

This sequence belongs to the LpxH family. It depends on Mn(2+) as a cofactor.

It is found in the cell inner membrane. It carries out the reaction UDP-2-N,3-O-bis[(3R)-3-hydroxytetradecanoyl]-alpha-D-glucosamine + H2O = 2-N,3-O-bis[(3R)-3-hydroxytetradecanoyl]-alpha-D-glucosaminyl 1-phosphate + UMP + 2 H(+). It participates in glycolipid biosynthesis; lipid IV(A) biosynthesis; lipid IV(A) from (3R)-3-hydroxytetradecanoyl-[acyl-carrier-protein] and UDP-N-acetyl-alpha-D-glucosamine: step 4/6. Functionally, hydrolyzes the pyrophosphate bond of UDP-2,3-diacylglucosamine to yield 2,3-diacylglucosamine 1-phosphate (lipid X) and UMP by catalyzing the attack of water at the alpha-P atom. Involved in the biosynthesis of lipid A, a phosphorylated glycolipid that anchors the lipopolysaccharide to the outer membrane of the cell. This is UDP-2,3-diacylglucosamine hydrolase from Salmonella schwarzengrund (strain CVM19633).